Reading from the N-terminus, the 1006-residue chain is Cytosolic carboxypeptidase 3 (1006 aa).

One can recognise a Peptidase M14 domain in the interval 304–576 (YPYTYSNLQE…HFCDSLLDYC (273 aa)). Residues histidine 368, glutamate 371, and histidine 464 each coordinate Zn(2+). The active-site Proton donor/acceptor is glutamate 540. The interval 790–810 (ESHHQLKSKAKRCSSFQSKRT) is disordered.

It belongs to the peptidase M14 family. Requires Zn(2+) as cofactor. As to expression, widely expressed. Expressed abundantly in tissues with m otile cilia such as testis, lung and trachea. Abundantly expressed in pituitary and kidney, moderately expressed in brain, eye, fat, pancreas, stomach, and adrenal.

The protein localises to the cytoplasm. It localises to the cytosol. The catalysed reaction is (L-glutamyl)(n+1)-gamma-L-glutamyl-L-glutamyl-[protein] + H2O = (L-glutamyl)(n)-gamma-L-glutamyl-L-glutamyl-[protein] + L-glutamate. Metallocarboxypeptidase that mediates deglutamylation of tubulin and non-tubulin target proteins. Catalyzes the removal of polyglutamate side chains present on the gamma-carboxyl group of glutamate residues within the C-terminal tail of tubulin protein. Specifically cleaves tubulin long-side-chains, while it is not able to remove the branching point glutamate. Also catalyzes the removal of polyglutamate residues from the carboxy-terminus of non-tubulin proteins such as MYLK. May catalyze the hydrolysis of aspartate from the carboxy-terminus of target proteins. Does not show detyrosinase or deglycylase activities from the carboxy-terminus of target proteins. The sequence is that of Cytosolic carboxypeptidase 3 from Mus musculus (Mouse).